Here is a 664-residue protein sequence, read N- to C-terminus: Protein-arginine deiminase type-3 (664 aa).

The protein belongs to the protein arginine deiminase family. Ca(2+) serves as cofactor. Epidermis and hair follicles.

It localises to the cytoplasm. The catalysed reaction is L-arginyl-[protein] + H2O = L-citrullyl-[protein] + NH4(+). Functionally, catalyzes the deimination of arginine residues of proteins. This is Protein-arginine deiminase type-3 (Padi3) from Rattus norvegicus (Rat).